The chain runs to 756 residues: Cellulose synthase catalytic subunit [UDP-forming] (756 aa).

4 helical membrane passes run 27-47, 49-69, 106-126, and 167-187; these read ASYIVGALGLCALIAATTVTL, NNEQLIVAAVCVVIFFVVGRG, GILGVILLMAELYALYMLFLS, and LTVLGALGIDWPPDKVNVYIL. Residues 147–242 form a catalytic subdomain A region; that stretch reads DWPTVDIFIP…YILILDCDHI (96 aa). Asp189 is an active-site residue. The substrate site is built by Asp238 and Asp240. The interval 319–379 is catalytic subdomain B; the sequence is EAIESIGGFA…GQRMRWARGM (61 aa). Asp335 is a catalytic residue. Helical transmembrane passes span 409-429, 432-452, 470-490, 517-537, and 551-571; these read FFFAIPRVIFLASPLAFLFAG, IIAAAPLAVAAYALPHMFHSI, VYETTMALFLVRVTIVTLLFP, NIIFATIMMGGLLIGLFELIV, and LLNCAWALISLIILFAAIAVG. Residues 576-681 enclose the PilZ domain; the sequence is QVRYNHRVEA…ERDIVRFVFG (106 aa). Residues 721-756 are disordered; the sequence is NSRPKKKPLALPVERREPTTIHSGQTQEGKISRAAS. Over residues 740-756 the composition is skewed to polar residues; that stretch reads TIHSGQTQEGKISRAAS.

Belongs to the glycosyltransferase 2 family. It depends on Mg(2+) as a cofactor.

The protein resides in the cell inner membrane. It catalyses the reaction [(1-&gt;4)-beta-D-glucosyl](n) + UDP-alpha-D-glucose = [(1-&gt;4)-beta-D-glucosyl](n+1) + UDP + H(+). The protein operates within glycan metabolism; bacterial cellulose biosynthesis. Its activity is regulated as follows. Activated by bis-(3'-5') cyclic diguanylic acid (c-di-GMP). Catalytic subunit of cellulose synthase. It polymerizes uridine 5'-diphosphate glucose to cellulose. The thick cellulosic mats generated by this enzyme probably provide a specialized protective environment to the bacterium. This Komagataeibacter sucrofermentans (strain ATCC 700178 / DSM 15973 / CECT 7291 / JCM 9730 / LMG 18788 / BPR 2001) (Acetobacter xylinus subsp. sucrofermentans) protein is Cellulose synthase catalytic subunit [UDP-forming] (bcsA).